The chain runs to 278 residues: Tyrosine-protein phosphatase pmp1 (278 aa).

Residues 60–214 (GPVCIYPPNI…LSEYQQIIRK (155 aa)) form the Tyrosine-protein phosphatase domain. The active-site Phosphocysteine intermediate is C158. Residues 217-278 (SQGPYQSSSL…SSGSISNDAS (62 aa)) are disordered. Residues 252 to 278 (SPSTSESSMFTNLRRTRSSGSISNDAS) are compositionally biased toward polar residues.

Belongs to the protein-tyrosine phosphatase family. Non-receptor class dual specificity subfamily.

The catalysed reaction is O-phospho-L-tyrosyl-[protein] + H2O = L-tyrosyl-[protein] + phosphate. Functionally, dual specificity phosphatase that dephosphorylates MAP kinase pmk1 on a Tyr. Has a role in chloride ion homeostasis by inactivating this pmk1 MAP kinase pathway. In Schizosaccharomyces pombe (strain 972 / ATCC 24843) (Fission yeast), this protein is Tyrosine-protein phosphatase pmp1 (pmp1).